The following is an 82-amino-acid chain: MKLTCMMIAAVLFLTTWTFVTADDSRYGLKNLFPKARHEMKNPEASKLNKREGCSSGGTFCGIHPGLCCSEFCFLWCITFID.

The N-terminal stretch at 1–22 is a signal peptide; the sequence is MKLTCMMIAAVLFLTTWTFVTA. A propeptide spanning residues 23-51 is cleaved from the precursor; it reads DDSRYGLKNLFPKARHEMKNPEASKLNKR. Intrachain disulfides connect cysteine 54-cysteine 69, cysteine 61-cysteine 73, and cysteine 68-cysteine 77.

Belongs to the conotoxin O1 superfamily. In terms of tissue distribution, expressed by the venom duct.

It localises to the secreted. Omega-conotoxins act at presynaptic membranes, they bind and block voltage-gated calcium channels (Cav). The sequence is that of Omega-conotoxin-like 9 from Conus striatus (Striated cone).